The following is a 215-amino-acid chain: MSKVYDWFEERLEIQAIADDITSKYVPPHVNIFYCLGGITLTCFLVQVATGFAMTFYYRPTVTEAFASVQYIMTEANFGWLIRSVHRWSASMMVLMMILHVFRVYLTGGFKKPRELTWVTGVVLAVLTASFGVTGYSLPWDQVGYWAVKIVTGVPDAIPVIGSPLVELLRGSASVGQSTLTRFYSLHTFVLPLLTAVFMLMHFPMIRKQGISGPL.

The helical transmembrane segment at 32–52 (IFYCLGGITLTCFLVQVATGF) threads the bilayer. Cys-35 contacts heme c. Heme b-binding residues include His-86 and His-100. 3 helical membrane passes run 90-110 (ASMM…TGGF), 116-136 (LTWV…VTGY), and 186-206 (LHTF…FPMI). The heme b site is built by His-187 and His-202.

This sequence belongs to the cytochrome b family. PetB subfamily. As to quaternary structure, the 4 large subunits of the cytochrome b6-f complex are cytochrome b6, subunit IV (17 kDa polypeptide, PetD), cytochrome f and the Rieske protein, while the 4 small subunits are PetG, PetL, PetM and PetN. The complex functions as a dimer. Heme b serves as cofactor. The cofactor is heme c.

Its subcellular location is the plastid. It localises to the chloroplast thylakoid membrane. Its function is as follows. Component of the cytochrome b6-f complex, which mediates electron transfer between photosystem II (PSII) and photosystem I (PSI), cyclic electron flow around PSI, and state transitions. The polypeptide is Cytochrome b6 (Nicotiana tomentosiformis (Tobacco)).